A 151-amino-acid chain; its full sequence is Ubiquitin-like protein 4A-B (151 aa).

The Ubiquitin-like domain maps to 1–76; it reads MILTIKPLQG…LNLVVRPAGE (76 aa).

Component of the BAT3 complex.

Its subcellular location is the cytoplasm. It is found in the cytosol. Component of the BAT3 complex, a multiprotein complex involved in the post-translational delivery of tail-anchored (TA) membrane proteins to the endoplasmic reticulum membrane. TA membrane proteins, also named type II transmembrane proteins, contain a single C-terminal transmembrane region. This is Ubiquitin-like protein 4A-B (ubl4ab) from Salmo salar (Atlantic salmon).